Reading from the N-terminus, the 85-residue chain is UPF0410 protein YdaS (85 aa).

Helical transmembrane passes span 2–22, 28–48, and 58–78; these read LSFLVSLVVAIVIGLIGSAIV, GGIFGSMIAGLIGAWIGHGLL, and FAIFPAIIGAAIFVFLLGLIF.

The protein belongs to the UPF0410 family.

It is found in the cell membrane. This Bacillus subtilis (strain 168) protein is UPF0410 protein YdaS (ydaS).